The primary structure comprises 159 residues: Phosphopantetheine adenylyltransferase (159 aa).

Thr9 provides a ligand contact to substrate. Residues 9-10 and His17 each bind ATP; that span reads TF. The substrate site is built by Lys41, Leu73, and Arg87. ATP is bound by residues 88–90, Glu98, and 123–129; these read GLR and YSFISST.

Belongs to the bacterial CoaD family. In terms of assembly, homohexamer. The cofactor is Mg(2+).

It is found in the cytoplasm. It catalyses the reaction (R)-4'-phosphopantetheine + ATP + H(+) = 3'-dephospho-CoA + diphosphate. The protein operates within cofactor biosynthesis; coenzyme A biosynthesis; CoA from (R)-pantothenate: step 4/5. Functionally, reversibly transfers an adenylyl group from ATP to 4'-phosphopantetheine, yielding dephospho-CoA (dPCoA) and pyrophosphate. The polypeptide is Phosphopantetheine adenylyltransferase (Pseudomonas syringae pv. tomato (strain ATCC BAA-871 / DC3000)).